The primary structure comprises 60 residues: Large ribosomal subunit protein uL30 (60 aa).

Belongs to the universal ribosomal protein uL30 family. Part of the 50S ribosomal subunit.

In Desulforapulum autotrophicum (strain ATCC 43914 / DSM 3382 / VKM B-1955 / HRM2) (Desulfobacterium autotrophicum), this protein is Large ribosomal subunit protein uL30.